The primary structure comprises 255 residues: 4-hydroxy-tetrahydrodipicolinate reductase (255 aa).

NAD(+)-binding positions include 13 to 18 (GCNGKM), 90 to 92 (CTT), and 114 to 117 (SANM). H147 serves as the catalytic Proton donor/acceptor. H148 lines the (S)-2,3,4,5-tetrahydrodipicolinate pocket. The active-site Proton donor is the K151. Position 157-158 (157-158 (GT)) interacts with (S)-2,3,4,5-tetrahydrodipicolinate.

It belongs to the DapB family.

Its subcellular location is the cytoplasm. It carries out the reaction (S)-2,3,4,5-tetrahydrodipicolinate + NAD(+) + H2O = (2S,4S)-4-hydroxy-2,3,4,5-tetrahydrodipicolinate + NADH + H(+). The catalysed reaction is (S)-2,3,4,5-tetrahydrodipicolinate + NADP(+) + H2O = (2S,4S)-4-hydroxy-2,3,4,5-tetrahydrodipicolinate + NADPH + H(+). It functions in the pathway amino-acid biosynthesis; L-lysine biosynthesis via DAP pathway; (S)-tetrahydrodipicolinate from L-aspartate: step 4/4. Functionally, catalyzes the conversion of 4-hydroxy-tetrahydrodipicolinate (HTPA) to tetrahydrodipicolinate. This chain is 4-hydroxy-tetrahydrodipicolinate reductase, found in Clostridium tetani (strain Massachusetts / E88).